A 103-amino-acid polypeptide reads, in one-letter code: Large ribosomal subunit protein bL21 (103 aa).

Belongs to the bacterial ribosomal protein bL21 family. In terms of assembly, part of the 50S ribosomal subunit. Contacts protein L20.

Functionally, this protein binds to 23S rRNA in the presence of protein L20. This chain is Large ribosomal subunit protein bL21, found in Paraburkholderia phytofirmans (strain DSM 17436 / LMG 22146 / PsJN) (Burkholderia phytofirmans).